Here is a 74-residue protein sequence, read N- to C-terminus: U19-theraphotoxin-Cg1a (74 aa).

The first 7 residues, 1-7 (IMFVWAS), serve as a signal peptide directing secretion. Residues 8 to 36 (AAEVEERGSDQRDSPASLKSMETIFQSEQ) constitute a propeptide that is removed on maturation. 3 disulfide bridges follow: Cys-39/Cys-53, Cys-46/Cys-58, and Cys-52/Cys-66.

Belongs to the neurotoxin 10 (Hwtx-1) family. 38 (Jztx-33) subfamily. Expressed by the venom gland.

The protein localises to the secreted. Functionally, probable ion channel inhibitor. This is U19-theraphotoxin-Cg1a from Chilobrachys guangxiensis (Chinese earth tiger tarantula).